The chain runs to 414 residues: WW domain-containing oxidoreductase (414 aa).

Positions 1 to 23 (MAALKYAGLEDTDSEEELPPGWE) are disordered. The region spanning 16–49 (EELPPGWEERTTKDGWVYYANHLEEKTQWEHPKS) is the WW 1 domain. The Nuclear localization signal motif lies at 50–55 (GKRKRV). One can recognise a WW 2 domain in the interval 57–90 (GGLPYGWEQETDENGQVYFVDHINKRTTYLDPRL). 131–137 (GANSGIG) contributes to the NADP(+) binding site. Ser-260 contacts substrate. Residue Tyr-293 is the Proton acceptor of the active site.

It belongs to the short-chain dehydrogenases/reductases (SDR) family.

It localises to the cytoplasm. The protein resides in the mitochondrion. Its subcellular location is the golgi apparatus. It is found in the lysosome. Functionally, putative oxidoreductase. Acts as a tumor suppressor and plays a role in apoptosis. May function synergistically with p53/TP53 to control genotoxic stress-induced cell death. Plays a role in TGFB1 signaling and TGFB1-mediated cell death. May also play a role in tumor necrosis factor (TNF)-mediated cell death. Required for normal bone development. Inhibits Wnt signaling. The protein is WW domain-containing oxidoreductase (WWOX) of Gallus gallus (Chicken).